Reading from the N-terminus, the 440-residue chain is uncharacterized protein (440 aa).

This is an uncharacterized protein from Rickettsia prowazekii (strain Madrid E).